Consider the following 281-residue polypeptide: Pantothenate synthetase (281 aa).

31–38 serves as a coordination point for ATP; sequence MGNLHAGH. The active-site Proton donor is H38. Position 62 (Q62) interacts with (R)-pantoate. Residue Q62 coordinates beta-alanine. 150–153 contributes to the ATP binding site; that stretch reads GKKD. A (R)-pantoate-binding site is contributed by Q156. ATP-binding positions include V179 and 187-190; that span reads MSSR.

It belongs to the pantothenate synthetase family. As to quaternary structure, homodimer.

The protein localises to the cytoplasm. It carries out the reaction (R)-pantoate + beta-alanine + ATP = (R)-pantothenate + AMP + diphosphate + H(+). The protein operates within cofactor biosynthesis; (R)-pantothenate biosynthesis; (R)-pantothenate from (R)-pantoate and beta-alanine: step 1/1. Functionally, catalyzes the condensation of pantoate with beta-alanine in an ATP-dependent reaction via a pantoyl-adenylate intermediate. This Xylella fastidiosa (strain M23) protein is Pantothenate synthetase.